Reading from the N-terminus, the 391-residue chain is Ammonium transporter Amt1 (391 aa).

Transmembrane regions (helical) follow at residues 12–32 (VFFF…FIAL), 51–71 (LDLA…SYGF), 88–108 (AWWM…TGGV), 112–132 (IKIL…YPIV), 152–172 (AGSG…AYVL), 192–212 (IPIA…FNIG), 223–243 (LASV…GGAL), 261–281 (VAVC…VGLL), 305–325 (IGPV…IPFL), and 338–358 (GQII…LIIY).

It belongs to the ammonia transporter channel (TC 1.A.11.2) family. Homotrimer. Interacts and forms a complex with GlnK1.

The protein resides in the cell membrane. Its activity is regulated as follows. Activity is regulated by the nitrogen regulatory protein GlnK1 via direct interaction. Formation of the GlnK1/Amt1 complex is decreased in the presence of Mg-ATP or 2-oxoglutarate. The presence of both effectors abolishes the formation of the complex. Its function is as follows. Involved in the uptake of ammonium/ammonia (NH(4)(+)/NH(3)). Transport is electrogenic. The sequence is that of Ammonium transporter Amt1 from Methanocaldococcus jannaschii (strain ATCC 43067 / DSM 2661 / JAL-1 / JCM 10045 / NBRC 100440) (Methanococcus jannaschii).